The primary structure comprises 134 residues: MDVFMKGLSMAKEGVVAAAEKTKQGVTEAAEKTKEGVLYVGSKTREGVVQGVASVAEKTKEQASHLGGAVFSGAGNIAAATGLVKREEFPTDLKPEEVAQEAAEEPLIEPLMEPEGESYEDPPQEEYQEYEPEA.

A run of 2 repeats spans residues 20–30 (EKTKQGVTEAA) and 31–41 (EKTKEGVLYVG). Residues 20-67 (EKTKQGVTEAAEKTKEGVLYVGSKTREGVVQGVASVAEKTKEQASHLG) are 4 X 11 AA tandem repeats of [EGS]-K-T-K-[EQ]-[GQ]-V-X(4). The 3; approximate repeat unit spans residues 42-56 (SKTREGVVQGVASVA). Repeat 4 spans residues 57–67 (EKTKEQASHLG). The interval 89–134 (FPTDLKPEEVAQEAAEEPLIEPLMEPEGESYEDPPQEEYQEYEPEA) is disordered. Residues 98–134 (VAQEAAEEPLIEPLMEPEGESYEDPPQEEYQEYEPEA) show a composition bias toward acidic residues. The residue at position 118 (serine 118) is a Phosphoserine; by BARK1, CK2 and GRK5.

It belongs to the synuclein family. Post-translationally, phosphorylated. Phosphorylation by G-protein coupled receptor kinases (GRK) is more efficient than phosphorylation by CK1, CK2 and CaM-kinase II. In terms of tissue distribution, expressed predominantly in brain; concentrated in presynaptic nerve terminals.

It is found in the cytoplasm. Non-amyloid component of senile plaques found in Alzheimer disease. Could act as a regulator of SNCA aggregation process. Protects neurons from staurosporine and 6-hydroxy dopamine (6OHDA)-stimulated caspase activation in a p53/TP53-dependent manner. Contributes to restore the SNCA anti-apoptotic function abolished by 6OHDA. Not found in the Lewy bodies associated with Parkinson disease. This is Beta-synuclein (SNCB) from Homo sapiens (Human).